A 79-amino-acid polypeptide reads, in one-letter code: Translational regulator CsrA (79 aa).

Belongs to the CsrA/RsmA family. In terms of assembly, homodimer; the beta-strands of each monomer intercalate to form a hydrophobic core, while the alpha-helices form wings that extend away from the core.

It localises to the cytoplasm. A translational regulator that binds mRNA to regulate translation initiation and/or mRNA stability. Usually binds in the 5'-UTR at or near the Shine-Dalgarno sequence preventing ribosome-binding, thus repressing translation. Its main target seems to be the major flagellin gene, while its function is anatagonized by FliW. The chain is Translational regulator CsrA from Shouchella clausii (strain KSM-K16) (Alkalihalobacillus clausii).